The sequence spans 321 residues: Probable pectate lyase A (321 aa).

Positions Met1 to Ala18 are cleaved as a signal peptide. A glycan (N-linked (GlcNAc...) asparagine) is linked at Asn93. Ca(2+)-binding residues include Asp134, Asp163, and Asp167. The active site involves Arg220. N-linked (GlcNAc...) asparagine glycosylation occurs at Asn238.

The protein belongs to the polysaccharide lyase 1 family. It depends on Ca(2+) as a cofactor.

It is found in the secreted. The enzyme catalyses Eliminative cleavage of (1-&gt;4)-alpha-D-galacturonan to give oligosaccharides with 4-deoxy-alpha-D-galact-4-enuronosyl groups at their non-reducing ends.. In terms of biological role, pectinolytic enzyme consist of four classes of enzymes: pectin lyase, polygalacturonase, pectin methylesterase and rhamnogalacturonase. Among pectinolytic enzymes, pectin lyase is the most important in depolymerization of pectin, since it cleaves internal glycosidic bonds of highly methylated pectins. Favors pectate, the anion, over pectin, the methyl ester. The polypeptide is Probable pectate lyase A (plyA) (Aspergillus fumigatus (strain CBS 144.89 / FGSC A1163 / CEA10) (Neosartorya fumigata)).